The chain runs to 183 residues: Lipid droplet coating protein Cap20 (183 aa).

The protein belongs to the perilipin family.

The protein resides in the lipid droplet. Functionally, lipid droplet coating protein that regulates lipid metabolism, appressorial turgor pressure, and virulence. Appressorial turgor pressure is important for the mechanical penetration of the host cuticle during infection. This is Lipid droplet coating protein Cap20 (Cap20) from Colletotrichum gloeosporioides (Anthracnose fungus).